We begin with the raw amino-acid sequence, 185 residues long: Ribosome-recycling factor (185 aa).

Belongs to the RRF family.

The protein resides in the cytoplasm. Its function is as follows. Responsible for the release of ribosomes from messenger RNA at the termination of protein biosynthesis. May increase the efficiency of translation by recycling ribosomes from one round of translation to another. In Yersinia enterocolitica serotype O:8 / biotype 1B (strain NCTC 13174 / 8081), this protein is Ribosome-recycling factor.